Here is a 270-residue protein sequence, read N- to C-terminus: Formamidopyrimidine-DNA glycosylase (270 aa).

Pro-2 functions as the Schiff-base intermediate with DNA in the catalytic mechanism. The active-site Proton donor is Glu-3. Catalysis depends on Lys-58, which acts as the Proton donor; for beta-elimination activity. DNA contacts are provided by His-91, Arg-110, and Arg-151. The segment at 236–270 (RVYDREDAPCRRCATPIRRIVQAQRASFYCPTCQR) adopts an FPG-type zinc-finger fold. Arg-260 functions as the Proton donor; for delta-elimination activity in the catalytic mechanism.

It belongs to the FPG family. As to quaternary structure, monomer. Requires Zn(2+) as cofactor.

The enzyme catalyses Hydrolysis of DNA containing ring-opened 7-methylguanine residues, releasing 2,6-diamino-4-hydroxy-5-(N-methyl)formamidopyrimidine.. It carries out the reaction 2'-deoxyribonucleotide-(2'-deoxyribose 5'-phosphate)-2'-deoxyribonucleotide-DNA = a 3'-end 2'-deoxyribonucleotide-(2,3-dehydro-2,3-deoxyribose 5'-phosphate)-DNA + a 5'-end 5'-phospho-2'-deoxyribonucleoside-DNA + H(+). In terms of biological role, involved in base excision repair of DNA damaged by oxidation or by mutagenic agents. Acts as a DNA glycosylase that recognizes and removes damaged bases. Has a preference for oxidized purines, such as 7,8-dihydro-8-oxoguanine (8-oxoG). Has AP (apurinic/apyrimidinic) lyase activity and introduces nicks in the DNA strand. Cleaves the DNA backbone by beta-delta elimination to generate a single-strand break at the site of the removed base with both 3'- and 5'-phosphates. This chain is Formamidopyrimidine-DNA glycosylase, found in Thiobacillus denitrificans (strain ATCC 25259 / T1).